Consider the following 794-residue polypeptide: Interphotoreceptor matrix proteoglycan 1 (794 aa).

Positions 1 to 20 (MHLEAARVIFFLWIFLQVQG) are cleaved as a signal peptide. Polar residues predominate over residues 202–213 (MTTAQRNPQLHP). 3 disordered regions span residues 202–221 (MTTAQRNPQLHPSRTPRVPT), 314–355 (KGKA…LYPT), and 413–449 (SPELPLGQPRLETVDRAGHSPPGASPTDGWSPPAMTS). In terms of domain architecture, SEA 1 spans 236-357 (LEQKVELSIS…KQRELYPTAS (122 aa)). Residues 332–351 (NKIESEGDPRGTTEEEKQRE) are compositionally biased toward basic and acidic residues. O-linked (GalNAc...) threonine glycosylation is found at Thr425 and Thr439. An O-linked (GalNAc...) serine glycan is attached at Ser443. 2 O-linked (GalNAc...) threonine glycosylation sites follow: Thr448 and Thr450. Residues 579-692 (RELVVFFSLR…YSLDVEPADQ (114 aa)) enclose the SEA 2 domain. Residue Asn624 is glycosylated (N-linked (GlcNAc...) asparagine). The Heparin- and hyaluronan-binding signature appears at 629–637 (KQLEILNFR). Asn656 carries an N-linked (GlcNAc...) asparagine glycan.

Post-translationally, highly glycosylated (N- and O-linked carbohydrates and sialic acid).

It is found in the cell projection. Its subcellular location is the cilium. It localises to the photoreceptor outer segment. The protein resides in the secreted. The protein localises to the extracellular space. It is found in the extracellular matrix. Its subcellular location is the interphotoreceptor matrix. It localises to the photoreceptor inner segment. In terms of biological role, chondroitin sulfate-, heparin- and hyaluronan-binding protein. May serve to form a basic macromolecular scaffold comprising the insoluble interphotoreceptor matrix. The polypeptide is Interphotoreceptor matrix proteoglycan 1 (IMPG1) (Bos taurus (Bovine)).